We begin with the raw amino-acid sequence, 70 residues long: Large ribosomal subunit protein bL31 (70 aa).

4 residues coordinate Zn(2+): cysteine 16, cysteine 18, cysteine 37, and cysteine 40.

Belongs to the bacterial ribosomal protein bL31 family. Type A subfamily. Part of the 50S ribosomal subunit. The cofactor is Zn(2+).

In terms of biological role, binds the 23S rRNA. This is Large ribosomal subunit protein bL31 from Shewanella baltica (strain OS223).